Reading from the N-terminus, the 123-residue chain is Large ribosomal subunit protein uL14 (123 aa).

Belongs to the universal ribosomal protein uL14 family. As to quaternary structure, part of the 50S ribosomal subunit. Forms a cluster with proteins L3 and L19. In the 70S ribosome, L14 and L19 interact and together make contacts with the 16S rRNA in bridges B5 and B8.

In terms of biological role, binds to 23S rRNA. Forms part of two intersubunit bridges in the 70S ribosome. This chain is Large ribosomal subunit protein uL14, found in Citrobacter koseri (strain ATCC BAA-895 / CDC 4225-83 / SGSC4696).